We begin with the raw amino-acid sequence, 81 residues long: Photosystem I iron-sulfur center (81 aa).

2 4Fe-4S ferredoxin-type domains span residues 2 to 31 (SHSV…MVAW) and 39 to 68 (IASA…VRVY). C11, C14, C17, C21, C48, C51, C54, and C58 together coordinate [4Fe-4S] cluster.

In terms of assembly, the eukaryotic PSI reaction center is composed of at least 11 subunits. [4Fe-4S] cluster is required as a cofactor.

The protein localises to the plastid. It localises to the chloroplast thylakoid membrane. The enzyme catalyses reduced [plastocyanin] + hnu + oxidized [2Fe-2S]-[ferredoxin] = oxidized [plastocyanin] + reduced [2Fe-2S]-[ferredoxin]. Functionally, apoprotein for the two 4Fe-4S centers FA and FB of photosystem I (PSI); essential for photochemical activity. FB is the terminal electron acceptor of PSI, donating electrons to ferredoxin. The C-terminus interacts with PsaA/B/D and helps assemble the protein into the PSI complex. Required for binding of PsaD and PsaE to PSI. PSI is a plastocyanin/cytochrome c6-ferredoxin oxidoreductase, converting photonic excitation into a charge separation, which transfers an electron from the donor P700 chlorophyll pair to the spectroscopically characterized acceptors A0, A1, FX, FA and FB in turn. This chain is Photosystem I iron-sulfur center, found in Guillardia theta (Cryptophyte).